Reading from the N-terminus, the 188-residue chain is Adenine phosphoribosyltransferase (188 aa).

It belongs to the purine/pyrimidine phosphoribosyltransferase family. In terms of assembly, homodimer.

It localises to the cytoplasm. It catalyses the reaction AMP + diphosphate = 5-phospho-alpha-D-ribose 1-diphosphate + adenine. It functions in the pathway purine metabolism; AMP biosynthesis via salvage pathway; AMP from adenine: step 1/1. In terms of biological role, catalyzes a salvage reaction resulting in the formation of AMP, that is energically less costly than de novo synthesis. In Neisseria meningitidis serogroup C (strain 053442), this protein is Adenine phosphoribosyltransferase.